An 825-amino-acid polypeptide reads, in one-letter code: Ent-copalyl diphosphate synthase 2, chloroplastic (825 aa).

The transit peptide at 1–70 directs the protein to the chloroplast; it reads MVLSSSCTTV…KGSSLTPIVR (70 aa). Substrate is bound at residue Lys241. The DXDD motif motif lies at 373 to 376; the sequence is EVDD. Lys459 lines the substrate pocket.

It belongs to the terpene synthase family. Tpsc subfamily. It depends on Mg(2+) as a cofactor. As to expression, expressed in tassels.

The protein resides in the plastid. It localises to the chloroplast. The catalysed reaction is (2E,6E,10E)-geranylgeranyl diphosphate = ent-copalyl diphosphate. It functions in the pathway plant hormone biosynthesis; gibberellin biosynthesis. Its function is as follows. Involved in gibberellin biosynthesis. Catalyzes the conversion of geranylgeranyl diphosphate to the gibberellin precursor ent-copalyl diphosphate (ent-CPP). Involved in the production of antifungal dolabralexin phytoalexins in response to biotic and abiotic stresses. In response to fungal infection and in associtation with KSL4, is involved in the production dolabradiene, a type of antifungal phytoalexin. The sequence is that of Ent-copalyl diphosphate synthase 2, chloroplastic from Zea mays (Maize).